The sequence spans 222 residues: Phosphoribosylformylglycinamidine synthase subunit PurQ (222 aa).

The region spanning 3 to 222 (AAVVVFPGSN…RALSGLLTDA (220 aa)) is the Glutamine amidotransferase type-1 domain. Catalysis depends on C86, which acts as the Nucleophile. Active-site residues include H194 and E196.

Part of the FGAM synthase complex composed of 1 PurL, 1 PurQ and 2 PurS subunits.

The protein resides in the cytoplasm. It catalyses the reaction N(2)-formyl-N(1)-(5-phospho-beta-D-ribosyl)glycinamide + L-glutamine + ATP + H2O = 2-formamido-N(1)-(5-O-phospho-beta-D-ribosyl)acetamidine + L-glutamate + ADP + phosphate + H(+). The catalysed reaction is L-glutamine + H2O = L-glutamate + NH4(+). It functions in the pathway purine metabolism; IMP biosynthesis via de novo pathway; 5-amino-1-(5-phospho-D-ribosyl)imidazole from N(2)-formyl-N(1)-(5-phospho-D-ribosyl)glycinamide: step 1/2. Functionally, part of the phosphoribosylformylglycinamidine synthase complex involved in the purines biosynthetic pathway. Catalyzes the ATP-dependent conversion of formylglycinamide ribonucleotide (FGAR) and glutamine to yield formylglycinamidine ribonucleotide (FGAM) and glutamate. The FGAM synthase complex is composed of three subunits. PurQ produces an ammonia molecule by converting glutamine to glutamate. PurL transfers the ammonia molecule to FGAR to form FGAM in an ATP-dependent manner. PurS interacts with PurQ and PurL and is thought to assist in the transfer of the ammonia molecule from PurQ to PurL. The protein is Phosphoribosylformylglycinamidine synthase subunit PurQ of Ruegeria sp. (strain TM1040) (Silicibacter sp.).